The following is a 301-amino-acid chain: GTPase IMAP family member 3 (301 aa).

Over 1–279 (METLQNVVTG…GKKLEVLHSD (279 aa)) the chain is Cytoplasmic. In terms of domain architecture, AIG1-type G spans 20 to 223 (SRPLRILLVG…HSNDLFLHAE (204 aa)). GTP is bound by residues 29 to 37 (GKSGCGKSA), Ser-50, 147 to 149 (RKE), and Asn-184. Residues 263–301 (VLKVLPIGKKLEVLHSDFCWYLVLAILIFFVFFFLLFYV) form a required for targeting to the endoplasmic reticulum region. The helical; Anchor for type IV membrane protein transmembrane segment at 280–300 (FCWYLVLAILIFFVFFFLLFY) threads the bilayer. Position 301 (Val-301) is a topological domain, lumenal.

The protein belongs to the TRAFAC class TrmE-Era-EngA-EngB-Septin-like GTPase superfamily. AIG1/Toc34/Toc159-like paraseptin GTPase family. IAN subfamily. Interacts with BAD, BAK1, BAX, BCL2, BCL2L1/Bcl-xL and BCL2L11/BimEL. The interaction with BAX is increased, when cells initiate apoptosis upon IL2 withdrawal. In terms of tissue distribution, expressed in thymus (in thymocytes), spleen (in splenocytes), lymph node and, at lower levels, in lung. Highly expressed in T lymphocytes.

The protein localises to the endoplasmic reticulum membrane. During thymocyte development, may support the positive selection of CD4 and CD8 T cells. May play a role in mitochondrial DNA segregation in hematopoietic tissues. Binds GTP. In Mus musculus (Mouse), this protein is GTPase IMAP family member 3 (Gimap3).